We begin with the raw amino-acid sequence, 496 residues long: MYKTKIICFLLGILSGLVFAPTFFIPALFTFSYLCYIVQKSQNWQAAAKFGYLFGFGHFLSGMYWISIGVSVYIADFWWAIPFALFGLPIILAFFISTNCTLSFFAKNNKYYQLIFCLLWVLFEWIRSWICTGLPWNLIGYAFSFSEILIQPLSITGIYGLSFIVIYIATSAYPVFSKNFTKLKILLASSMLILTVMVIYGAMRVSTNPTHFTDIKVRLVQPSIPQTAKWDEEEFWHNLMLHINLSEKLEPTDLIIWSEAALVVPDDIPQVKLELLNMLNSTNAILITGGISDNKKHGDKFELYSAMYALDKNNHKLFEYHKSHLVPFGEYMPLKKILPFKKLTHGLIDYKEGNGGLVYIKKYHLKIKPLICYESIFPNFVQTNNEIADVIINITNDSWYGKSSGPYQHFHISRSRAVENGLPMIRVANNGISAIVDPVGRIVKKLNLNEINYIQGLIPQKLTTPTIFSQFGNFAMLLPIVFILLIHYLLSLIFDD.

The next 6 membrane-spanning stretches (helical) occupy residues 6–26 (IICFLLGILSGLVFAPTFFIP), 50–70 (FGYLFGFGHFLSGMYWISIGV), 77–97 (FWWAIPFALFGLPIILAFFIS), 114–134 (LIFCLLWVLFEWIRSWICTGL), 148–168 (ILIQPLSITGIYGLSFIVIYI), and 183–203 (LKILLASSMLILTVMVIYGAM). In terms of domain architecture, CN hydrolase spans 220–464 (VQPSIPQTAK…QGLIPQKLTT (245 aa)). The Proton acceptor role is filled by Glu259. Residue Lys322 is part of the active site. Residue Cys372 is the Nucleophile of the active site. The chain crosses the membrane as a helical span at residues 474-494 (FAMLLPIVFILLIHYLLSLIF).

This sequence belongs to the CN hydrolase family. Apolipoprotein N-acyltransferase subfamily.

The protein localises to the cell inner membrane. The enzyme catalyses N-terminal S-1,2-diacyl-sn-glyceryl-L-cysteinyl-[lipoprotein] + a glycerophospholipid = N-acyl-S-1,2-diacyl-sn-glyceryl-L-cysteinyl-[lipoprotein] + a 2-acyl-sn-glycero-3-phospholipid + H(+). The protein operates within protein modification; lipoprotein biosynthesis (N-acyl transfer). Catalyzes the phospholipid dependent N-acylation of the N-terminal cysteine of apolipoprotein, the last step in lipoprotein maturation. The protein is Apolipoprotein N-acyltransferase of Rickettsia typhi (strain ATCC VR-144 / Wilmington).